The sequence spans 244 residues: Biosynthetic peptidoglycan transglycosylase (244 aa).

The helical transmembrane segment at 25–45 (LLLLLAIALLYQSWFLLHIIY) threads the bilayer.

It belongs to the glycosyltransferase 51 family.

Its subcellular location is the cell inner membrane. It carries out the reaction [GlcNAc-(1-&gt;4)-Mur2Ac(oyl-L-Ala-gamma-D-Glu-L-Lys-D-Ala-D-Ala)](n)-di-trans,octa-cis-undecaprenyl diphosphate + beta-D-GlcNAc-(1-&gt;4)-Mur2Ac(oyl-L-Ala-gamma-D-Glu-L-Lys-D-Ala-D-Ala)-di-trans,octa-cis-undecaprenyl diphosphate = [GlcNAc-(1-&gt;4)-Mur2Ac(oyl-L-Ala-gamma-D-Glu-L-Lys-D-Ala-D-Ala)](n+1)-di-trans,octa-cis-undecaprenyl diphosphate + di-trans,octa-cis-undecaprenyl diphosphate + H(+). It participates in cell wall biogenesis; peptidoglycan biosynthesis. In terms of biological role, peptidoglycan polymerase that catalyzes glycan chain elongation from lipid-linked precursors. This chain is Biosynthetic peptidoglycan transglycosylase, found in Nitrosomonas eutropha (strain DSM 101675 / C91 / Nm57).